Here is a 275-residue protein sequence, read N- to C-terminus: Phosphite import ATP-binding protein PxtA (275 aa).

An ABC transporter domain is found at Leu11–Ser252. Residue Gly44–Ser51 participates in ATP binding. The segment at Arg251–Arg275 is disordered.

Belongs to the ABC transporter superfamily. Phosphonates importer (TC 3.A.1.9.1) family. In terms of assembly, the complex is composed of two ATP-binding proteins (PtxA), two transmembrane proteins (PtxC) and a solute-binding protein (PtxB).

The protein resides in the cell inner membrane. The catalysed reaction is phosphite(out) + ATP + H2O = phosphite(in) + ADP + phosphate + H(+). Its function is as follows. Part of the ABC transporter complex PtxABC involved in phosphite import. Responsible for energy coupling to the transport system. In Stutzerimonas stutzeri (Pseudomonas stutzeri), this protein is Phosphite import ATP-binding protein PxtA (ptxA).